The sequence spans 585 residues: Arginine--tRNA ligase (585 aa).

The 'HIGH' region signature appears at 131 to 141 (ANPTGPMHVGH).

This sequence belongs to the class-I aminoacyl-tRNA synthetase family. Monomer.

It localises to the cytoplasm. The catalysed reaction is tRNA(Arg) + L-arginine + ATP = L-arginyl-tRNA(Arg) + AMP + diphosphate. The polypeptide is Arginine--tRNA ligase (Agrobacterium fabrum (strain C58 / ATCC 33970) (Agrobacterium tumefaciens (strain C58))).